We begin with the raw amino-acid sequence, 1992 residues long: E3 ubiquitin-protein ligase TRIP12 (1992 aa).

The span at 1 to 10 shows a compositional bias: polar residues; sequence MSNRPNNNPG. 3 disordered regions span residues 1-398, 797-817, and 938-1080; these read MSNR…DDSE, QRKPNPLANSNTSGYSESKKD, and SLLT…ASKD. Serine 2 bears the N-acetylserine mark. Serine 12 bears the Phosphoserine mark. Positions 18-27 are enriched in polar residues; the sequence is RNTAGAQPQD. The segment covering 48-70 has biased composition (basic and acidic residues); it reads DPDRANTSERQKTGQVPKKDNSR. Residues serine 77, serine 85, and serine 100 each carry the phosphoserine modification. Over residues 78–88 the composition is skewed to polar residues; it reads PDYNRTNSPSS. Polar residues predominate over residues 119–132; sequence EQQLKSAQSPSTSK. 2 stretches are compositionally biased toward low complexity: residues 154–166 and 175–216; these read SSCVKSGSGSEST and PTKL…SSTV. An N6-acetyllysine modification is found at lysine 181. Positions 280 to 290 are enriched in polar residues; that stretch reads PGSSKSETSKP. Phosphoserine is present on residues serine 310 and serine 312. The span at 326 to 338 shows a compositional bias: polar residues; sequence QKTTGSCASTSRR. Positions 346-358 are enriched in basic and acidic residues; sequence GAAEARRQEKMAD. Polar residues-rich tracts occupy residues 360 to 371 and 803 to 812; these read ESNQEAVNSSAA and LANSNTSGYS. One can recognise a WWE domain in the interval 749–836; the sequence is MLKKGNAQNT…DPELAKSFIK (88 aa). Serine 942 bears the Phosphoserine mark. Residues 948-973 are compositionally biased toward low complexity; that stretch reads TNGSGSMGSTTSVSSGTATAATHAAA. A phosphoserine mark is found at serine 991 and serine 997. The span at 1001 to 1014 shows a compositional bias: basic residues; sequence KRKRLPKRGPRRPK. Serine 1016 is subject to Phosphoserine. Residues 1017–1026 show a composition bias toward basic and acidic residues; it reads PPRDDDKVDN. Residues 1029 to 1040 are compositionally biased toward low complexity; it reads KSPTTTQSPKSS. A Phosphoserine modification is found at serine 1030. Residues 1041-1062 are compositionally biased toward polar residues; that stretch reads FLASLNPKTWGRLSTQSNSNNI. 4 positions are modified to phosphoserine: serine 1317, serine 1322, serine 1329, and serine 1376. Threonine 1377 is modified (phosphothreonine). 2 disordered regions span residues 1407–1433 and 1568–1587; these read SNKDCVGGKRGRAQTAPTKTSPRNAKK and TNPEINQSDSQDSRVAPRLD. Lysine 1425 is subject to N6-acetyllysine. At serine 1427 the chain carries Phosphoserine. The interval 1496–1570 is K-box; sequence EIIPTSEFIN…AMQRLLDTNP (75 aa). In terms of domain architecture, HECT spans 1885 to 1992; sequence PDHGYTHDSR…REGQQSFHLS (108 aa). Residue cysteine 1959 is the Glycyl thioester intermediate of the active site.

It belongs to the UPL family. K-HECT subfamily. In terms of assembly, interacts with MYC; leading to disrupt interaction with isoform p19ARF/ARF of CDKN2A. Interacts with TRADD; leading to disrupt interaction with isoform p19ARF/ARF of CDKN2A. Interacts with SMARCC1; leading to disrupt interaction with SMARCE1.

It localises to the nucleus. The protein resides in the nucleoplasm. The enzyme catalyses S-ubiquitinyl-[E2 ubiquitin-conjugating enzyme]-L-cysteine + [acceptor protein]-L-lysine = [E2 ubiquitin-conjugating enzyme]-L-cysteine + N(6)-ubiquitinyl-[acceptor protein]-L-lysine.. The protein operates within protein modification; protein ubiquitination. Functionally, E3 ubiquitin-protein ligase involved in ubiquitin fusion degradation (UFD) pathway and regulation of DNA repair. Part of the ubiquitin fusion degradation (UFD) pathway, a process that mediates ubiquitination of protein at their N-terminus, regardless of the presence of lysine residues in target proteins. Acts as a key regulator of DNA damage response by acting as a suppressor of RNF168, an E3 ubiquitin-protein ligase that promotes accumulation of 'Lys-63'-linked histone H2A and H2AX at DNA damage sites, thereby acting as a guard against excessive spreading of ubiquitinated chromatin at damaged chromosomes. In normal cells, mediates ubiquitination and degradation of isoform p19ARF/ARF of CDKN2A, a lysine-less tumor suppressor required for p53/TP53 activation under oncogenic stress. In cancer cells, however, isoform p19ARF/ARF and TRIP12 are located in different cell compartments, preventing isoform p19ARF/ARF ubiquitination and degradation. Does not mediate ubiquitination of isoform p16-INK4a of CDKN2A. Also catalyzes ubiquitination of NAE1 and SMARCE1, leading to their degradation. Ubiquitination and degradation of target proteins is regulated by interaction with proteins such as MYC, TRADD or SMARCC1, which disrupt the interaction between TRIP12 and target proteins. Mediates ubiquitination of ASXL1: following binding to N(6)-methyladenosine methylated DNA, ASXL1 is ubiquitinated by TRIP12, leading to its degradation and subsequent inactivation of the PR-DUB complex. This is E3 ubiquitin-protein ligase TRIP12 (TRIP12) from Homo sapiens (Human).